We begin with the raw amino-acid sequence, 382 residues long: Probable cytosolic iron-sulfur protein assembly protein 1 (382 aa).

WD repeat units follow at residues 9 to 48, 55 to 107, 138 to 178, 185 to 224, 231 to 278, 303 to 342, and 349 to 382; these read AHHDKIWSVSSHQKLPLLATGSSDKTSAIFRLSETEKFPR, THTR…DNDE, GHEH…EEFE, EHQQDVKHVIWHPTQNLLASSSYDDTICIYRQEYDDDDWG, GHQG…SETN, AHTYPVYSVVWSSVSGRIASAGADGKIAVYKQTDGVWEIE, and HGVHEINTLAWSKLDDNREVLVSGGDDGYVNVWE.

This sequence belongs to the WD repeat CIA1 family. In terms of assembly, interacts with NAR1.

Its subcellular location is the cytoplasm. It localises to the nucleus. In terms of biological role, essential component of the cytosolic iron-sulfur (Fe/S) protein assembly machinery. Required for the maturation of extramitochondrial Fe/S proteins. The protein is Probable cytosolic iron-sulfur protein assembly protein 1 of Meyerozyma guilliermondii (strain ATCC 6260 / CBS 566 / DSM 6381 / JCM 1539 / NBRC 10279 / NRRL Y-324) (Yeast).